Reading from the N-terminus, the 52-residue chain is Large ribosomal subunit protein eL40 (52 aa).

It belongs to the eukaryotic ribosomal protein eL40 family.

The protein is Large ribosomal subunit protein eL40 of Thermococcus onnurineus (strain NA1).